Reading from the N-terminus, the 248-residue chain is 1-(5-phosphoribosyl)-5-[(5-phosphoribosylamino)methylideneamino] imidazole-4-carboxamide isomerase (248 aa).

Residue aspartate 8 is the Proton acceptor of the active site. Aspartate 131 (proton donor) is an active-site residue.

The protein belongs to the HisA/HisF family.

It localises to the cytoplasm. It carries out the reaction 1-(5-phospho-beta-D-ribosyl)-5-[(5-phospho-beta-D-ribosylamino)methylideneamino]imidazole-4-carboxamide = 5-[(5-phospho-1-deoxy-D-ribulos-1-ylimino)methylamino]-1-(5-phospho-beta-D-ribosyl)imidazole-4-carboxamide. The protein operates within amino-acid biosynthesis; L-histidine biosynthesis; L-histidine from 5-phospho-alpha-D-ribose 1-diphosphate: step 4/9. The sequence is that of 1-(5-phosphoribosyl)-5-[(5-phosphoribosylamino)methylideneamino] imidazole-4-carboxamide isomerase from Cupriavidus necator (strain ATCC 17699 / DSM 428 / KCTC 22496 / NCIMB 10442 / H16 / Stanier 337) (Ralstonia eutropha).